Here is a 109-residue protein sequence, read N- to C-terminus: Small ribosomal subunit protein uS10c (109 aa).

It belongs to the universal ribosomal protein uS10 family. As to quaternary structure, part of the 30S ribosomal subunit.

The protein resides in the plastid. It localises to the chloroplast. Its function is as follows. Involved in the binding of tRNA to the ribosomes. This chain is Small ribosomal subunit protein uS10c, found in Cyanidium caldarium (Red alga).